The following is a 147-amino-acid chain: Hemoglobin subunit epsilon (147 aa).

One can recognise a Globin domain in the interval 3 to 147; that stretch reads HFTAEEKAAI…VAIALGHKYH (145 aa). Phosphoserine is present on residues S14 and S51. Heme b is bound by residues H64 and H93.

Belongs to the globin family. In terms of assembly, heterotetramer of two alpha chains and two epsilon chains in early embryonic hemoglobin Gower-2; two zeta chains and two epsilon chains in early embryonic hemoglobin Gower-1. In terms of tissue distribution, red blood cells.

Its function is as follows. The epsilon chain is a beta-type chain of early mammalian embryonic hemoglobin. This is Hemoglobin subunit epsilon (HBE1) from Saimiri boliviensis boliviensis (Bolivian squirrel monkey).